We begin with the raw amino-acid sequence, 137 residues long: uncharacterized protein (137 aa).

The 70-residue stretch at Met4–Leu73 folds into the HTH merR-type domain. The segment at residues Ser8–Ile27 is a DNA-binding region (H-T-H motif).

This is an uncharacterized protein from Synechocystis sp. (strain ATCC 27184 / PCC 6803 / Kazusa).